The primary structure comprises 149 residues: Calmodulin-1 (149 aa).

An N-acetylalanine modification is found at alanine 2. EF-hand domains are found at residues 8–43 (EQIA…LGQN), 44–79 (PTEA…KMKD), 81–116 (DSEE…LGEK), and 117–149 (LTDE…MTSK). Positions 21, 23, 25, 27, 32, 57, 59, 61, 63, 68, 94, 96, 98, and 105 each coordinate Ca(2+). N6,N6,N6-trimethyllysine is present on lysine 116. Ca(2+)-binding residues include aspartate 130, aspartate 132, aspartate 134, glutamine 136, and glutamate 141.

It belongs to the calmodulin family.

Its function is as follows. Calmodulin mediates the control of a large number of enzymes, ion channels and other proteins by Ca(2+). Among the enzymes to be stimulated by the calmodulin-Ca(2+) complex are a number of protein kinases and phosphatases. This chain is Calmodulin-1, found in Branchiostoma floridae (Florida lancelet).